The chain runs to 741 residues: T-box transcription factor TBX3 (741 aa).

The T-box; first part DNA-binding region spans Leu-107–Thr-220. The segment at residues Ile-241–Asp-305 is a DNA-binding region (T-box; second part). Ser-369 carries the post-translational modification Phosphoserine. Residues Ser-369–Glu-469 form a disordered region. Basic and acidic residues-rich tracts occupy residues Ala-377 to Glu-386 and Ser-420 to His-437. A phosphoserine mark is found at Ser-432, Ser-438, Ser-456, Ser-705, Ser-736, Ser-738, and Ser-740. Over residues Ser-438–Arg-447 the composition is skewed to polar residues.

Interacts with PML. In terms of tissue distribution, in adults, highest levels in lung. Also found in brain, heart, kidney, liver and ovary.

It localises to the nucleus. Transcriptional repressor involved in developmental processes. Binds to the palindromic T site 5'-TTCACACCTAGGTGTGAA-3' DNA sequence, or a half-site, which are present in the regulatory region of several genes. Probably plays a role in limb pattern formation. Required for mammary placode induction, and maintenance of the mammary buds during development. Involved in branching morphogenesis in both developing lungs and adult mammary glands, via negative modulation of target genes; acting redundantly with TBX2. Required, together with TBX2, to maintain cell proliferation in the embryonic lung mesenchyme; perhaps acting downstream of SHH, BMP and TGFbeta signaling. Involved in modulating early inner ear development, acting independently of, and also redundantly with, TBX2 in different subregions of the developing ear. Acts as a negative regulator of PML function in cellular senescence. This chain is T-box transcription factor TBX3 (Tbx3), found in Mus musculus (Mouse).